A 921-amino-acid chain; its full sequence is Short transient receptor potential channel 3 (921 aa).

The interval M1 to S73 is disordered. The Cytoplasmic segment spans residues M1–F459. The span at P19 to A31 shows a compositional bias: acidic residues. ANK repeat units lie at residues A111–V140, M146–I175, D177–S203, and P232–R261. Ca(2+) is bound at residue E158. The chain crosses the membrane as a helical span at residues V460–A477. The Extracellular portion of the chain corresponds to S478–T508. N-linked (GlcNAc...) asparagine glycosylation is present at N489. The chain crosses the membrane as a helical span at residues W509–K527. Ca(2+) contacts are provided by E525, E528, and N543. Residues E528–Q540 lie on the Cytoplasmic side of the membrane. Residues L541 to L562 traverse the membrane as a helical segment. The Extracellular segment spans residues A563–D606. Residues P607–L630 traverse the membrane as a helical segment. Residues P631–D649 lie on the Cytoplasmic side of the membrane. The ANK 5 repeat unit spans residues E634–A663. The helical transmembrane segment at I650–S673 threads the bilayer. The Extracellular segment spans residues Y674–H713. A helical transmembrane segment spans residues K714 to L739. Over I740–E921 the chain is Cytoplasmic. Positions Q850–D870 are binds to IP3R3. The Ca(2+) site is built by E871, E874, E876, and D883.

This sequence belongs to the transient receptor (TC 1.A.4) family. STrpC subfamily. TRPC3 sub-subfamily. As to quaternary structure, homotetramer. Interacts with ITPR1. Interacts with ITPR3. Interacts with MX1. Interacts with RNF24. Interacts with JPH2; the interaction is involved in maintaining Ca(2+) homeostasis in skeletal muscle and is mediated by JPH2 'Ser-165' phosphorylation. Interacts with isoform short of TRPC1. In terms of tissue distribution, expressed predominantly in brain and at much lower levels in ovary, colon, small intestine, lung, prostate, placenta and testis.

The protein localises to the cell membrane. It carries out the reaction Ca(2+)(in) = Ca(2+)(out). Its activity is regulated as follows. Activated by diacylglycerol (DAG) in a membrane-delimited fashion, independently of protein kinase C. Activated by inositol 1,4,5-triphosphate receptors (ITPR) with bound IP3. May be activated by internal calcium store depletion. Inhibited by intracellular Ca(2+). Functionally, forms a receptor-activated non-selective calcium permeant cation channel. In terms of biological role, forms a receptor-activated non-selective calcium permeant cation channel. May be operated by a phosphatidylinositol second messenger system activated by receptor tyrosine kinases or G-protein coupled receptors. In Homo sapiens (Human), this protein is Short transient receptor potential channel 3 (TRPC3).